A 246-amino-acid chain; its full sequence is Sortase B (246 aa).

Residues 5–24 (SFLGKSLTLVVLGVFLFSGW) traverse the membrane as a helical segment.

Belongs to the bacterial sortase family. Class B subfamily.

It is found in the cell membrane. Functionally, transpeptidase that anchors surface proteins to the cell wall. Recognizes and modifies its substrate by proteolytic cleavage of a C-terminal sorting signal. Following cleavage, a covalent intermediate is formed via a thioester bond between the sortase and its substrate, which is then transferred and covalently attached to the cell wall. Catalyzes a cell wall sorting reaction in which a surface protein with the consensus sorting signal NP(Q/K)(T/S)(N/G/S)(D/A) is cleaved between the fourth and fifth residues, and the fourth position is linked to the cell wall. This is not the major sortase in Listeria, it seems to anchor only 2 proteins, Hbp2 (SvpA) and Hbp1. The protein is Sortase B of Listeria monocytogenes serovar 1/2a (strain ATCC BAA-679 / EGD-e).